The primary structure comprises 153 residues: Large ribosomal subunit protein uL15 (153 aa).

The disordered stretch occupies residues 21–41; the sequence is RGIGSGKGKTGGRGIKGQKSR. The segment covering 23–35 has biased composition (gly residues); sequence IGSGKGKTGGRGI.

Belongs to the universal ribosomal protein uL15 family. Part of the 50S ribosomal subunit.

Functionally, binds to the 23S rRNA. This Rickettsia rickettsii (strain Iowa) protein is Large ribosomal subunit protein uL15.